We begin with the raw amino-acid sequence, 177 residues long: MSRIGRLPITIPAGVDVTIDGDRVSVKGPKGQLEHSLPTPITATLEEGQVTVARPDDERESRSLHGLTRTLISNMVEGVTNGFSKQLEVVGTGYRVQAKGQDLEFALGYSHPVPVKAPQGITFTVEGNRVTVAGIDKQQVGETAANIRKLRRPDPYKGKGVRYAGEQIRRKAGKAGK.

The protein belongs to the universal ribosomal protein uL6 family. As to quaternary structure, part of the 50S ribosomal subunit.

This protein binds to the 23S rRNA, and is important in its secondary structure. It is located near the subunit interface in the base of the L7/L12 stalk, and near the tRNA binding site of the peptidyltransferase center. In Micrococcus luteus (strain ATCC 4698 / DSM 20030 / JCM 1464 / CCM 169 / CCUG 5858 / IAM 1056 / NBRC 3333 / NCIMB 9278 / NCTC 2665 / VKM Ac-2230) (Micrococcus lysodeikticus), this protein is Large ribosomal subunit protein uL6.